The sequence spans 400 residues: Transcription initiation factor IIF subunit beta (400 aa).

Over residues 1 to 19 the composition is skewed to polar residues; sequence MSSGSAGAPALSNNSTNSV. The disordered stretch occupies residues 1–47; it reads MSSGSAGAPALSNNSTNSVAKEKSGNISGDEYLSQEEEVFDGNDIEN. Phosphoserine occurs at positions 28, 34, and 56. Positions 33 to 47 are enriched in acidic residues; the sequence is LSQEEEVFDGNDIEN. 2 disordered regions span residues 165 to 194 and 366 to 400; these read QERE…VMTD and TLGE…EDVV. Residues 174–189 show a composition bias toward basic residues; it reads KQQQQKRRNNRKKFNH. The span at 386-400 shows a compositional bias: acidic residues; sequence AEADLEDEIEMEDVV.

Belongs to the TFIIF beta subunit family. In terms of assembly, TFIIF is composed of three different subunits: TFG1/RAP74, TFG2/RAP30 and TAF14.

It localises to the nucleus. In terms of biological role, TFIIF is a general transcription initiation factor that binds to RNA polymerase II. Its functions include the recruitment of RNA polymerase II to the promoter bound DNA-TBP-TFIIB complex, decreasing the affinity of RNA polymerase II for non-specific DNA, allowing for the subsequent recruitment of TFIIE and TFIIH, and facilitating RNA polymerase II elongation. This Saccharomyces cerevisiae (strain ATCC 204508 / S288c) (Baker's yeast) protein is Transcription initiation factor IIF subunit beta (TFG2).